A 308-amino-acid polypeptide reads, in one-letter code: Ribosomal RNA small subunit methyltransferase H (308 aa).

Residues 35–37, aspartate 54, phenylalanine 80, aspartate 101, and glutamine 108 contribute to the S-adenosyl-L-methionine site; that span reads GGH.

The protein belongs to the methyltransferase superfamily. RsmH family.

It localises to the cytoplasm. The enzyme catalyses cytidine(1402) in 16S rRNA + S-adenosyl-L-methionine = N(4)-methylcytidine(1402) in 16S rRNA + S-adenosyl-L-homocysteine + H(+). Functionally, specifically methylates the N4 position of cytidine in position 1402 (C1402) of 16S rRNA. The polypeptide is Ribosomal RNA small subunit methyltransferase H (Mycoplasma pneumoniae (strain ATCC 29342 / M129 / Subtype 1) (Mycoplasmoides pneumoniae)).